The primary structure comprises 317 residues: Melanocyte-stimulating hormone receptor (317 aa).

The tract at residues 1–23 is disordered; it reads MSGQGPQRRLLGSPNATSPTTPH. Topologically, residues 1–37 are extracellular; it reads MSGQGPQRRLLGSPNATSPTTPHFKLAANQTGPRCLE. An N-linked (GlcNAc...) asparagine glycan is attached at Asn-29. A helical membrane pass occupies residues 38 to 63; the sequence is VSIPNGLFLSLGLVSVVENVLVVAAI. The Cytoplasmic segment spans residues 64-72; it reads AKNRNLHSP. The helical transmembrane segment at 73–93 threads the bilayer; sequence MYYFIGCLAVSDLLVSVTNVL. Residues 94–118 lie on the Extracellular side of the membrane; the sequence is ETAVMLLVEAGALAAQAAVVQQLDD. The helical transmembrane segment at 119 to 140 threads the bilayer; it reads IIDVLICGSMVSSLCFLGAIAV. The Cytoplasmic segment spans residues 141–163; sequence DRYLSIFYALRYHSIVTLPRAWR. The chain crosses the membrane as a helical span at residues 164–183; that stretch reads AISAIWVASVLSSTLFIAYY. The Extracellular segment spans residues 184-191; it reads NHTAVLLC. A helical transmembrane segment spans residues 192 to 211; the sequence is LVSFFVAMLVLMAVLYVHML. Over 212 to 240 the chain is Cytoplasmic; that stretch reads ARARQHARGIARLRKRQHSVHQGFGLKGA. Residues 241–266 form a helical membrane-spanning segment; it reads ATLTILLGIFFLCWGPFFLHLSLMVL. At 267-279 the chain is on the extracellular side; that stretch reads CPQHPICGCVFQN. A helical transmembrane segment spans residues 280 to 300; that stretch reads FNLFLTLIICNSIIDPFIYAF. The Cytoplasmic portion of the chain corresponds to 301–317; that stretch reads RSQELRKTLQEVVLCSW. A lipid anchor (S-palmitoyl cysteine) is attached at Cys-315.

It belongs to the G-protein coupled receptor 1 family. In terms of assembly, interacts with MGRN1, but does not undergo MGRN1-mediated ubiquitination; this interaction competes with GNAS-binding and thus inhibits agonist-induced cAMP production. Interacts with OPN3; the interaction results in a decrease in MC1R-mediated cAMP signaling and ultimately a decrease in melanin production in melanocytes.

It localises to the cell membrane. Functionally, receptor for MSH (alpha, beta and gamma) and ACTH. The activity of this receptor is mediated by G proteins which activate adenylate cyclase. Mediates melanogenesis, the production of eumelanin (black/brown) and phaeomelanin (red/yellow), via regulation of cAMP signaling in melanocytes. The polypeptide is Melanocyte-stimulating hormone receptor (MC1R) (Vulpes vulpes (Red fox)).